A 415-amino-acid polypeptide reads, in one-letter code: uncharacterized protein (415 aa).

[4Fe-4S] cluster is bound by residues C85, C91, C94, and C175. S-adenosyl-L-methionine contacts are provided by Q248, Y276, E297, and N344. Residue C371 is the Nucleophile of the active site.

The protein belongs to the class I-like SAM-binding methyltransferase superfamily. RNA M5U methyltransferase family.

This is an uncharacterized protein from Leptospira interrogans serogroup Icterohaemorrhagiae serovar Lai (strain 56601).